The following is a 39-amino-acid chain: Adipokinetic prohormone type 2 (39 aa).

At Q1 the chain carries Pyrrolidone carboxylic acid. The residue at position 8 (W8) is a Tryptophan amide.

It belongs to the AKH/HRTH/RPCH family. Adipokinetic hormone precursor-related peptide (APRP) can form three type of disulfide-bond dimers: p1 (alpha-alpha), p2 (alpha-beta), and p3 (beta-beta).

Its subcellular location is the secreted. Its function is as follows. This hormone, released from cells in the corpora cardiaca, causes release of diglycerides from the fat body and stimulation of muscles to use these diglycerides as an energy source during energy-demanding processes. The protein is Adipokinetic prohormone type 2 of Schistocerca gregaria (Desert locust).